A 272-amino-acid chain; its full sequence is Elongation factor Ts (272 aa).

The segment at 76–79 (TDFV) is involved in Mg(2+) ion dislocation from EF-Tu.

It belongs to the EF-Ts family.

The protein localises to the cytoplasm. Its function is as follows. Associates with the EF-Tu.GDP complex and induces the exchange of GDP to GTP. It remains bound to the aminoacyl-tRNA.EF-Tu.GTP complex up to the GTP hydrolysis stage on the ribosome. This chain is Elongation factor Ts, found in Corynebacterium urealyticum (strain ATCC 43042 / DSM 7109).